Consider the following 396-residue polypeptide: Chorismate synthase (396 aa).

NADP(+) is bound by residues arginine 41 and arginine 47. FMN-binding positions include 130–132 (RAS), glycine 298, 313–317 (KPIPT), and arginine 339.

Belongs to the chorismate synthase family. As to quaternary structure, homotetramer. It depends on FMNH2 as a cofactor.

It catalyses the reaction 5-O-(1-carboxyvinyl)-3-phosphoshikimate = chorismate + phosphate. The protein operates within metabolic intermediate biosynthesis; chorismate biosynthesis; chorismate from D-erythrose 4-phosphate and phosphoenolpyruvate: step 7/7. In terms of biological role, catalyzes the anti-1,4-elimination of the C-3 phosphate and the C-6 proR hydrogen from 5-enolpyruvylshikimate-3-phosphate (EPSP) to yield chorismate, which is the branch point compound that serves as the starting substrate for the three terminal pathways of aromatic amino acid biosynthesis. This reaction introduces a second double bond into the aromatic ring system. The chain is Chorismate synthase from Syntrophomonas wolfei subsp. wolfei (strain DSM 2245B / Goettingen).